Reading from the N-terminus, the 228-residue chain is CD302 antigen (228 aa).

Residues 1–20 (MPHAALSSLVLLSLATAIFA) form the signal peptide. Residues 21 to 165 (DCPSSIWVQF…YDKKYLSDNH (145 aa)) are Extracellular-facing. The C-type lectin domain occupies 30–149 (FQGSCYTFLQ…CEMSSVTGTL (120 aa)). A glycan (N-linked (GlcNAc...) asparagine) is linked at asparagine 107. An intrachain disulfide couples cysteine 125 to cysteine 140. Residues 166-186 (ILISTLVIASTVTLAVLGAVI) traverse the membrane as a helical segment. The Cytoplasmic segment spans residues 187–228 (WFLYRRSARSGFTSFSPAPQSPYSDGCALVVSEEDEYSVQLD).

Its subcellular location is the membrane. It localises to the cell projection. The protein resides in the filopodium. It is found in the cytoplasm. The protein localises to the cell cortex. Its subcellular location is the microvillus. Potential multifunctional C-type lectin receptor that may play roles in endocytosis and phagocytosis as well as in cell adhesion and migration. In Rattus norvegicus (Rat), this protein is CD302 antigen (Cd302).